The sequence spans 144 residues: Granulocyte-macrophage colony-stimulating factor (144 aa).

The N-terminal stretch at 1 to 17 (MWLQNLLFLNTVVCSIS) is a signal peptide. O-linked (GalNAc...) serine glycosylation is found at S22 and S24. The O-linked (GalNAc...) threonine glycan is linked to T27. N-linked (GlcNAc...) asparagine glycans are attached at residues N44, N45, and N54. 2 disulfide bridges follow: C71–C113 and C105–C138.

It belongs to the GM-CSF family. In terms of assembly, monomer. The signaling GM-CSF receptor complex is a dodecamer of two head-to-head hexamers of two alpha, two beta, and two ligand subunits.

The protein localises to the secreted. Functionally, cytokine that stimulates the growth and differentiation of hematopoietic precursor cells from various lineages, including granulocytes, macrophages, eosinophils and erythrocytes. The chain is Granulocyte-macrophage colony-stimulating factor (CSF2) from Felis catus (Cat).